Consider the following 356-residue polypeptide: Tyrosine recombinase XerS (356 aa).

Residues 16 to 121 (IMPWYVLDYY…ALSSLYKYLT (106 aa)) enclose the Core-binding (CB) domain. One can recognise a Tyr recombinase domain in the interval 169-354 (AFLDYVDKEY…VNDEQKNALD (186 aa)). Residues R210, K234, H306, R309, and H332 contribute to the active site. Y341 (O-(3'-phospho-DNA)-tyrosine intermediate) is an active-site residue.

This sequence belongs to the 'phage' integrase family. XerS subfamily.

It is found in the cytoplasm. With respect to regulation, ftsK is required for recombination. Functionally, site-specific tyrosine recombinase, which acts by catalyzing the cutting and rejoining of the recombining DNA molecules. Essential to convert dimers of the bacterial chromosome into monomers to permit their segregation at cell division. The protein is Tyrosine recombinase XerS of Streptococcus pyogenes serotype M18 (strain MGAS8232).